A 372-amino-acid chain; its full sequence is Ribosomal RNA small subunit methyltransferase H (372 aa).

Residues 78–80, D97, Y124, D148, and Q155 each bind S-adenosyl-L-methionine; that span reads GGH.

This sequence belongs to the methyltransferase superfamily. RsmH family.

The protein resides in the cytoplasm. The enzyme catalyses cytidine(1402) in 16S rRNA + S-adenosyl-L-methionine = N(4)-methylcytidine(1402) in 16S rRNA + S-adenosyl-L-homocysteine + H(+). Its function is as follows. Specifically methylates the N4 position of cytidine in position 1402 (C1402) of 16S rRNA. The chain is Ribosomal RNA small subunit methyltransferase H from Mycobacterium leprae (strain Br4923).